We begin with the raw amino-acid sequence, 72 residues long: Gas vesicle protein A (72 aa).

Belongs to the gas vesicle GvpA family. The gas vesicle shell is 2 nm thick and consists of a single layer of this protein. It forms helical ribs nearly perpendicular to the long axis of the vesicle.

It localises to the gas vesicle shell. In terms of biological role, gas vesicles are hollow, gas filled proteinaceous nanostructures found in some microorganisms. During planktonic growth they allow positioning of the organism at a favorable depth for light or nutrient acquisition. GvpA forms the protein shell. The chain is Gas vesicle protein A from Planktothrix agardhii (Oscillatoria agardhii).